Reading from the N-terminus, the 449-residue chain is Intestinal acid phosphatase (449 aa).

The first 19 residues, 1 to 19 (MVSAISIVAIFALEGFVTT), serve as a signal peptide directing secretion. The Extracellular portion of the chain corresponds to 20 to 428 (YSDGTKDLVF…TDLNKSSSFA (409 aa)). His-36 functions as the Nucleophile in the catalytic mechanism. Asp-321 (proton donor) is an active-site residue. The helical transmembrane segment at 429-449 (TVSMLFIAAILAINNNFLGLF) threads the bilayer.

It belongs to the histidine acid phosphatase family. Homodimer. Post-translationally, the N-terminus is blocked. As to expression, expressed in the intestine, specifically on the edge of the gut lumen, in the 14 posterior cells of the intestine.

Its subcellular location is the membrane. It catalyses the reaction a phosphate monoester + H2O = an alcohol + phosphate. Functionally, acid phosphatase required for normal growth and development. Specifically required for normal gut differentiation. The sequence is that of Intestinal acid phosphatase from Caenorhabditis elegans.